The primary structure comprises 476 residues: Aspartyl/glutamyl-tRNA(Asn/Gln) amidotransferase subunit B (476 aa).

It belongs to the GatB/GatE family. GatB subfamily. As to quaternary structure, heterotrimer of A, B and C subunits.

The enzyme catalyses L-glutamyl-tRNA(Gln) + L-glutamine + ATP + H2O = L-glutaminyl-tRNA(Gln) + L-glutamate + ADP + phosphate + H(+). It catalyses the reaction L-aspartyl-tRNA(Asn) + L-glutamine + ATP + H2O = L-asparaginyl-tRNA(Asn) + L-glutamate + ADP + phosphate + 2 H(+). Its function is as follows. Allows the formation of correctly charged Asn-tRNA(Asn) or Gln-tRNA(Gln) through the transamidation of misacylated Asp-tRNA(Asn) or Glu-tRNA(Gln) in organisms which lack either or both of asparaginyl-tRNA or glutaminyl-tRNA synthetases. The reaction takes place in the presence of glutamine and ATP through an activated phospho-Asp-tRNA(Asn) or phospho-Glu-tRNA(Gln). The sequence is that of Aspartyl/glutamyl-tRNA(Asn/Gln) amidotransferase subunit B from Bacillus cytotoxicus (strain DSM 22905 / CIP 110041 / 391-98 / NVH 391-98).